We begin with the raw amino-acid sequence, 367 residues long: Probable alcohol dehydrogenase adh (367 aa).

Zn(2+) contacts are provided by C43, H64, C97, C100, C103, C111, and N163.

The protein belongs to the zinc-containing alcohol dehydrogenase family. The cofactor is Zn(2+).

The catalysed reaction is a primary alcohol + NAD(+) = an aldehyde + NADH + H(+). It catalyses the reaction a secondary alcohol + NAD(+) = a ketone + NADH + H(+). This is Probable alcohol dehydrogenase adh (adh) from Mycobacterium tuberculosis (strain CDC 1551 / Oshkosh).